The following is a 546-amino-acid chain: Probable Dol-P-Man:Man(7)GlcNAc(2)-PP-Dol alpha-1,6-mannosyltransferase (546 aa).

Transmembrane regions (helical) follow at residues 5–25, 67–87, 113–133, 166–186, 200–220, 258–278, 283–303, 305–325, and 340–360; these read ESICWYLANILLVTCIGYYSY, FIPSLFIAVLSYIPSWFVNPL, FGTLSGALFILFSCAQFHLVY, ILVFAAAIVRSEIALLLMCLI, LLLVGISSSLAAVGASFLIDS, LPWLFLNPTTLLFLLISFVYI, LLIYVPLFFIFVYSFLGHKEW, FIIYSIPWFNAASAIGASLCF, and LMFFSGIIFGFIGSSFLLYVF.

The protein belongs to the glycosyltransferase 22 family.

It is found in the endoplasmic reticulum membrane. The catalysed reaction is an alpha-D-Man-(1-&gt;2)-alpha-D-Man-(1-&gt;2)-alpha-D-Man-(1-&gt;3)-[alpha-D-Man-(1-&gt;2)-alpha-D-Man-(1-&gt;3)-alpha-D-Man-(1-&gt;6)]-beta-D-Man-(1-&gt;4)-beta-D-GlcNAc-(1-&gt;4)-alpha-D-GlcNAc-diphospho-di-trans,poly-cis-dolichol + a di-trans,poly-cis-dolichyl beta-D-mannosyl phosphate = an alpha-D-Man-(1-&gt;2)-alpha-D-Man-(1-&gt;2)-alpha-D-Man-(1-&gt;3)-[alpha-D-Man-(1-&gt;2)-alpha-D-Man-(1-&gt;3)-[alpha-D-Man-(1-&gt;6)]-alpha-D-Man-(1-&gt;6)]-beta-D-Man-(1-&gt;4)-beta-D-GlcNAc-(1-&gt;4)-alpha-D-GlcNAc-diphospho-di-trans,poly-cis-dolichol + a di-trans,poly-cis-dolichyl phosphate + H(+). It participates in protein modification; protein glycosylation. Mannosyltransferase that operates in the biosynthetic pathway of dolichol-linked oligosaccharides, the glycan precursors employed in protein asparagine (N)-glycosylation. The assembly of dolichol-linked oligosaccharides begins on the cytosolic side of the endoplasmic reticulum membrane and finishes in its lumen. The sequential addition of sugars to dolichol pyrophosphate produces dolichol-linked oligosaccharides containing fourteen sugars, including two GlcNAcs, nine mannoses and three glucoses. Once assembled, the oligosaccharide is transferred from the lipid to nascent proteins by oligosaccharyltransferases. In the lumen of the endoplasmic reticulum, adds the eighth mannose residue in an alpha-1,6 linkage onto Man(7)GlcNAc(2)-PP-dolichol to produce Man(8)GlcNAc(2)-PP-dolichol. In Schizosaccharomyces pombe (strain 972 / ATCC 24843) (Fission yeast), this protein is Probable Dol-P-Man:Man(7)GlcNAc(2)-PP-Dol alpha-1,6-mannosyltransferase (alg12).